A 511-amino-acid chain; its full sequence is Colicin-B (511 aa).

Residues aspartate 17–serine 24 carry the TonB box motif. The next 2 membrane-spanning stretches (helical) occupy residues methionine 455–phenylalanine 475 and leucine 477–isoleucine 497.

Belongs to the channel forming colicin family.

Its subcellular location is the cell membrane. This colicin is a channel-forming colicin. This class of transmembrane toxins depolarize the cytoplasmic membrane, leading to dissipation of cellular energy. In terms of biological role, colicins are polypeptide toxins produced by and active against E.coli and closely related bacteria. This Escherichia coli protein is Colicin-B (cba).